The primary structure comprises 276 residues: NH(3)-dependent NAD(+) synthetase (276 aa).

ATP is bound at residue 46–53; it reads GISGGQDS. Residue D52 participates in Mg(2+) binding. R140 lines the deamido-NAD(+) pocket. T160 contributes to the ATP binding site. Position 165 (E165) interacts with Mg(2+). Deamido-NAD(+)-binding residues include K173 and D180. Residues K189 and T211 each contribute to the ATP site. 260-261 is a binding site for deamido-NAD(+); the sequence is HK.

It belongs to the NAD synthetase family. Homodimer.

The enzyme catalyses deamido-NAD(+) + NH4(+) + ATP = AMP + diphosphate + NAD(+) + H(+). It participates in cofactor biosynthesis; NAD(+) biosynthesis; NAD(+) from deamido-NAD(+) (ammonia route): step 1/1. Its function is as follows. Catalyzes the ATP-dependent amidation of deamido-NAD to form NAD. Uses ammonia as a nitrogen source. The chain is NH(3)-dependent NAD(+) synthetase from Citrobacter koseri (strain ATCC BAA-895 / CDC 4225-83 / SGSC4696).